The following is a 535-amino-acid chain: Portal protein (535 aa).

The protein belongs to the podoviridae portal protein family. In terms of assembly, homododecamer. Interacts with major capsid protein. Interacts with the tail tube proteins gp11 and gp12. Interacts with the terminase large subunit. Interacts with the internal virion protein gp14.

Its subcellular location is the virion. Functionally, forms the portal vertex of the capsid. This portal plays critical roles in head assembly, genome packaging, neck/tail attachment, and genome ejection. The portal protein multimerizes as a single ring-shaped homododecamer arranged around a central channel. This Enterobacteria phage T3 (Bacteriophage T3) protein is Portal protein (8).